A 95-amino-acid chain; its full sequence is Glutamyl-tRNA(Gln) amidotransferase subunit C (95 aa).

This sequence belongs to the GatC family. In terms of assembly, heterotrimer of A, B and C subunits.

It catalyses the reaction L-glutamyl-tRNA(Gln) + L-glutamine + ATP + H2O = L-glutaminyl-tRNA(Gln) + L-glutamate + ADP + phosphate + H(+). It carries out the reaction L-aspartyl-tRNA(Asn) + L-glutamine + ATP + H2O = L-asparaginyl-tRNA(Asn) + L-glutamate + ADP + phosphate + 2 H(+). In terms of biological role, allows the formation of correctly charged Asn-tRNA(Asn) or Gln-tRNA(Gln) through the transamidation of misacylated Asp-tRNA(Asn) or Glu-tRNA(Gln) in organisms which lack either or both of asparaginyl-tRNA or glutaminyl-tRNA synthetases. The reaction takes place in the presence of glutamine and ATP through an activated phospho-Asp-tRNA(Asn) or phospho-Glu-tRNA(Gln). The protein is Glutamyl-tRNA(Gln) amidotransferase subunit C of Rhizobium meliloti (strain 1021) (Ensifer meliloti).